A 95-amino-acid chain; its full sequence is Small ubiquitin-related modifier 2 (95 aa).

Met-1 is covalently cross-linked (Peptide (Met-Gly) (interchain with G-Cter in ubiquitin)). Residues Lys-5 and Lys-7 each participate in a glycyl lysine isopeptide (Lys-Gly) (interchain with G-Cter in SUMO2) cross-link. Lys-11 carries the post-translational modification N6-acetyllysine; alternate. A Glycyl lysine isopeptide (Lys-Gly) (interchain with G-Cter in SUMO); alternate cross-link involves residue Lys-11. Lys-11 is covalently cross-linked (Glycyl lysine isopeptide (Lys-Gly) (interchain with G-Cter in SUMO1); alternate). Residue Lys-11 forms a Glycyl lysine isopeptide (Lys-Gly) (interchain with G-Cter in SUMO2); alternate linkage. A Glycyl lysine isopeptide (Lys-Gly) (interchain with G-Cter in ubiquitin); alternate cross-link involves residue Lys-11. In terms of domain architecture, Ubiquitin-like spans 16–95; it reads DHINLKVAGQ…VFQQQTGGVY (80 aa). Lys-21 participates in a covalent cross-link: Glycyl lysine isopeptide (Lys-Gly) (interchain with G-Cter in SUMO2). Gly-93 is covalently cross-linked (Glycyl lysine isopeptide (Gly-Lys) (interchain with K-? in acceptor proteins)). Residues 94 to 95 constitute a propeptide that is removed on maturation; the sequence is VY.

The protein belongs to the ubiquitin family. SUMO subfamily. Interacts with SAE2 and UBE2I. Interacts with ZNF451. Identified in a complex with ZNF451 and UBE2I/UBC9, where one ZNF451 interacts with one UBE2I/UBC9 and two SUMO2 chains, one bound to the UBE2I/UBC9 active site and the other to another region of the same UBE2I/UBC9 molecule. Covalently attached to a number of proteins. Interacts with PELP1. Interacts with USP25; the interaction sumoylates USP25. Interacts with SIMC1, CASP8AP2, RNF111 and SOBP (via SIM domains). Interacts with MTA1. Interacts with HINT1. Interacts with GCNA (via SIM domains); this interaction allows the GCNA recruitment to DPCs sites. In terms of processing, polymeric chains can be formed through Lys-11 cross-linking. Polymeric SUMO2 chains undergo 'Lys-6'-, 'Lys-11'-, 'Lys-48'- and 'Lys-63'-linked polyubiquitination by RNF4. Post-translationally, cleavage of precursor form by SENP1 or SENP2 is necessary for function. Monoubiquitinated N-terminally by UBE2W, which primes it for RNF4-dependent polyubiquitination by the UBE2V1-UBE2N heterodimer.

Its subcellular location is the nucleus. It localises to the PML body. Ubiquitin-like protein that can be covalently attached to proteins as a monomer or as a lysine-linked polymer. Covalent attachment via an isopeptide bond to its substrates requires prior activation by the E1 complex SAE1-SAE2 and linkage to the E2 enzyme UBE2I, and can be promoted by an E3 ligase such as PIAS1-4, RANBP2 or CBX4. This post-translational modification on lysine residues of proteins plays a crucial role in a number of cellular processes such as nuclear transport, DNA replication and repair, mitosis and signal transduction. Polymeric SUMO2 chains are also susceptible to polyubiquitination which functions as a signal for proteasomal degradation of modified proteins. Plays a role in the regulation of sumoylation status of SETX. The sequence is that of Small ubiquitin-related modifier 2 from Bos taurus (Bovine).